A 62-amino-acid chain; its full sequence is Small, acid-soluble spore protein A (62 aa).

Belongs to the alpha/beta-type SASP family.

SASP are bound to spore DNA. They are double-stranded DNA-binding proteins that cause DNA to change to an a-like conformation. They protect the DNA backbone from chemical and enzymatic cleavage and are thus involved in dormant spore's high resistance to UV light. This is Small, acid-soluble spore protein A (sasP-A) from Priestia megaterium (Bacillus megaterium).